A 94-amino-acid polypeptide reads, in one-letter code: Scorpine-like-1 (94 aa).

Residues 1–18 (MNTKFTVLIFLGVIVVSY) form the signal peptide. A BetaSPN-type CS-alpha/beta domain is found at 54–94 (EYGCMMDISWNKDCQRHCQSTEQKDGICHGMKCKCGKPRSY). Disulfide bonds link cysteine 57/cysteine 81, cysteine 67/cysteine 86, and cysteine 71/cysteine 88.

It belongs to the long chain scorpion toxin family. Class 3 subfamily. As to expression, expressed by the venom gland.

Its subcellular location is the secreted. Its function is as follows. Has antibacterial activity. This Urodacus yaschenkoi (Inland robust scorpion) protein is Scorpine-like-1.